The following is a 353-amino-acid chain: Photosystem II D2 protein (353 aa).

Position 2 is an N-acetylthreonine (Thr2). A Phosphothreonine modification is found at Thr2. Residues Cys41–Thr61 form a helical membrane-spanning segment. His118 provides a ligand contact to chlorophyll a. Residues Gly125–Pro141 form a helical membrane-spanning segment. Pheophytin a-binding residues include Gln130 and Asn143. Residues Val153–Ser166 traverse the membrane as a helical segment. His198 is a binding site for chlorophyll a. The helical transmembrane segment at Ala208–Asp228 threads the bilayer. A plastoquinone is bound by residues His215 and Phe262. His215 is a Fe cation binding site. A Fe cation-binding site is contributed by His269. A helical transmembrane segment spans residues Gly279 to Arg295.

It belongs to the reaction center PufL/M/PsbA/D family. As to quaternary structure, PSII is composed of 1 copy each of membrane proteins PsbA, PsbB, PsbC, PsbD, PsbE, PsbF, PsbH, PsbI, PsbJ, PsbK, PsbL, PsbM, PsbT, PsbX, PsbY, PsbZ, Psb30/Ycf12, at least 3 peripheral proteins of the oxygen-evolving complex and a large number of cofactors. It forms dimeric complexes. Requires The D1/D2 heterodimer binds P680, chlorophylls that are the primary electron donor of PSII, and subsequent electron acceptors. It shares a non-heme iron and each subunit binds pheophytin, quinone, additional chlorophylls, carotenoids and lipids. There is also a Cl(-1) ion associated with D1 and D2, which is required for oxygen evolution. The PSII complex binds additional chlorophylls, carotenoids and specific lipids. as cofactor.

The protein localises to the plastid. It localises to the chloroplast thylakoid membrane. It catalyses the reaction 2 a plastoquinone + 4 hnu + 2 H2O = 2 a plastoquinol + O2. In terms of biological role, photosystem II (PSII) is a light-driven water:plastoquinone oxidoreductase that uses light energy to abstract electrons from H(2)O, generating O(2) and a proton gradient subsequently used for ATP formation. It consists of a core antenna complex that captures photons, and an electron transfer chain that converts photonic excitation into a charge separation. The D1/D2 (PsbA/PsbD) reaction center heterodimer binds P680, the primary electron donor of PSII as well as several subsequent electron acceptors. D2 is needed for assembly of a stable PSII complex. In Ranunculus macranthus (Large buttercup), this protein is Photosystem II D2 protein.